The primary structure comprises 2151 residues: RNA-directed RNA polymerase L (2151 aa).

Positions 36, 54, 97, 110, and 111 each coordinate Mn(2+). The active-site For endonuclease activity is Lys-124. Residues 956–1142 form the RdRp catalytic domain; that stretch reads NGKFIRMKRK…SVNTEMWKSM (187 aa). Mg(2+) is bound at residue Asp-1099.

Belongs to the Bunyavirales RNA polymerase family. Interacts with the viral nucleoprotein. Requires Mn(2+) as cofactor. Mg(2+) serves as cofactor.

Its subcellular location is the host cytoplasm. It is found in the host perinuclear region. The catalysed reaction is RNA(n) + a ribonucleoside 5'-triphosphate = RNA(n+1) + diphosphate. RNA-dependent RNA polymerase, which is responsible for the replication and transcription of the viral RNA genome using antigenomic RNA as an intermediate. During transcription, synthesizes subgenomic RNAs and assures their capping by a cap-snatching mechanism, which involves the endonuclease activity cleaving the host capped pre-mRNAs. These short capped RNAs are then used as primers for viral transcription. Cleaves ssRNA substrates but not DNA. Seems to downregulate the expression of its own and heterologous mRNAs through its endonuclease activity. The polypeptide is RNA-directed RNA polymerase L (Apodemus agrarius (Eurasian field mouse)).